Reading from the N-terminus, the 186-residue chain is Adenine phosphoribosyltransferase (186 aa).

This sequence belongs to the purine/pyrimidine phosphoribosyltransferase family. Homodimer.

It localises to the cytoplasm. It catalyses the reaction AMP + diphosphate = 5-phospho-alpha-D-ribose 1-diphosphate + adenine. It participates in purine metabolism; AMP biosynthesis via salvage pathway; AMP from adenine: step 1/1. In terms of biological role, catalyzes a salvage reaction resulting in the formation of AMP, that is energically less costly than de novo synthesis. The protein is Adenine phosphoribosyltransferase of Xanthomonas oryzae pv. oryzae (strain MAFF 311018).